A 516-amino-acid polypeptide reads, in one-letter code: L-amino-acid oxidase (516 aa).

A signal peptide spans 1–18 (MNVFFMFSLLFLAALGSC). A disulfide bond links cysteine 28 and cysteine 189. Residues 61-62 (MS), 81-82 (EA), arginine 89, and 103-106 (GPMR) each bind FAD. Substrate is bound by residues arginine 106 and histidine 239. Valine 279 is a binding site for FAD. Cysteine 349 and cysteine 430 are disulfide-bonded. Asparagine 379 is a glycosylation site (N-linked (GlcNAc...) asparagine). Tyrosine 390 lines the substrate pocket. Residues glutamate 475 and 482-487 (GWIDST) contribute to the FAD site. 482–483 (GW) contributes to the substrate binding site.

Belongs to the flavin monoamine oxidase family. FIG1 subfamily. Homodimer; non-covalently linked. It depends on FAD as a cofactor. N-glycosylated. In terms of tissue distribution, expressed by the venom gland.

The protein resides in the secreted. The enzyme catalyses an L-alpha-amino acid + O2 + H2O = a 2-oxocarboxylate + H2O2 + NH4(+). In terms of biological role, catalyzes an oxidative deamination of predominantly hydrophobic and aromatic L-amino acids, thus producing hydrogen peroxide that may contribute to the diverse toxic effects of this enzyme. Exhibits diverse biological activities, such as hemorrhage, hemolysis, edema, apoptosis of vascular endothelial cells or tumor cell lines, antibacterial and antiparasitic activities, as well as regulation of platelet aggregation. Effects of snake L-amino oxidases on platelets are controversial, since they either induce aggregation or inhibit agonist-induced aggregation. These different effects are probably due to different experimental conditions. The protein is L-amino-acid oxidase of Sistrurus catenatus edwardsii (Desert massasauga).